Reading from the N-terminus, the 111-residue chain is Ribonuclease P protein component (111 aa).

This sequence belongs to the RnpA family. As to quaternary structure, consists of a catalytic RNA component (M1 or rnpB) and a protein subunit.

It catalyses the reaction Endonucleolytic cleavage of RNA, removing 5'-extranucleotides from tRNA precursor.. RNaseP catalyzes the removal of the 5'-leader sequence from pre-tRNA to produce the mature 5'-terminus. It can also cleave other RNA substrates such as 4.5S RNA. The protein component plays an auxiliary but essential role in vivo by binding to the 5'-leader sequence and broadening the substrate specificity of the ribozyme. The protein is Ribonuclease P protein component of Clostridium botulinum (strain Loch Maree / Type A3).